The primary structure comprises 80 residues: MLIPVVCFTCGFPIGTYAAIFDKARTEYIKTKMGGTLPQNIPLDASLQIELKDLITALGIPMRVCCRTHLITTLDYRKYY.

Residues cysteine 7, cysteine 10, cysteine 65, and cysteine 66 each coordinate Zn(2+).

It belongs to the archaeal RpoN/eukaryotic RPB10 RNA polymerase subunit family. Part of the viral DNA-directed RNA polymerase that consists of 8 polII-like subunits (RPB1, RPB2, RPB3, RPB5, RPB6, RPB7, RPB9, RPB10), a capping enzyme and a termination factor.

The protein resides in the host cytoplasm. Functionally, component of the DNA-directed RNA polymerase (RNAP) that catalyzes the transcription in the cytoplasm of viral DNA into RNA using the four ribonucleoside triphosphates as substrates. The protein is DNA-directed RNA polymerase RPB10 homolog of African swine fever virus (isolate Pig/Kenya/KEN-50/1950) (ASFV).